The chain runs to 506 residues: Lysine--tRNA ligase (506 aa).

Mg(2+)-binding residues include E416 and E423.

It belongs to the class-II aminoacyl-tRNA synthetase family. In terms of assembly, homodimer. Requires Mg(2+) as cofactor.

The protein localises to the cytoplasm. It carries out the reaction tRNA(Lys) + L-lysine + ATP = L-lysyl-tRNA(Lys) + AMP + diphosphate. This Xylella fastidiosa (strain M23) protein is Lysine--tRNA ligase.